The chain runs to 36 residues: Photosystem II reaction center protein M (36 aa).

M1 bears the Blocked amino end (Met) mark. Residues 1-11 lie on the Lumenal side of the membrane; it reads MEVNQLGFIAT. A helical membrane pass occupies residues 12-27; sequence ALFVLVPSVFLIILYV. The Cytoplasmic segment spans residues 28–36; that stretch reads QTESQQKSS.

Belongs to the PsbM family. As to quaternary structure, PSII is composed of 1 copy each of membrane proteins PsbA, PsbB, PsbC, PsbD, PsbE, PsbF, PsbH, PsbI, PsbJ, PsbK, PsbL, PsbM, PsbT, PsbX, PsbY, PsbZ, Psb30/Ycf12, peripheral proteins PsbO, CyanoQ (PsbQ), PsbU, PsbV, PsbU, PsbV and a large number of cofactors. It forms dimeric complexes. It depends on PSII binds multiple chlorophylls, carotenoids and specific lipids. as a cofactor.

The protein resides in the cellular thylakoid membrane. One of the components of the core complex of photosystem II (PSII). PSII is a light-driven water:plastoquinone oxidoreductase that uses light energy to abstract electrons from H(2)O, generating O(2) and a proton gradient subsequently used for ATP formation. It consists of a core antenna complex that captures photons, and an electron transfer chain that converts photonic excitation into a charge separation. This subunit is found at the monomer-monomer interface. Probably involved in dimerization of PSII; at the monomer-monomer interface the only protein-protein contacts observed are between the 2 PsbM subunits. Lipids, chlorophylls and carotenoids contribute strongly to PSII dimerization. The polypeptide is Photosystem II reaction center protein M (Thermostichus vulcanus (Synechococcus vulcanus)).